We begin with the raw amino-acid sequence, 79 residues long: MAKAEIRKPKPKSNPLKAADITVIDYKDVALLRKFISDRGKIRARRVTGVTVQEQRKIAQAIKNAREVALLPYSGAGRG.

This sequence belongs to the bacterial ribosomal protein bS18 family. In terms of assembly, part of the 30S ribosomal subunit. Forms a tight heterodimer with protein bS6.

In terms of biological role, binds as a heterodimer with protein bS6 to the central domain of the 16S rRNA, where it helps stabilize the platform of the 30S subunit. This is Small ribosomal subunit protein bS18 from Renibacterium salmoninarum (strain ATCC 33209 / DSM 20767 / JCM 11484 / NBRC 15589 / NCIMB 2235).